Here is a 370-residue protein sequence, read N- to C-terminus: Anhydro-N-acetylmuramic acid kinase (370 aa).

13-20 (GTSMDGVD) is an ATP binding site.

This sequence belongs to the anhydro-N-acetylmuramic acid kinase family.

The enzyme catalyses 1,6-anhydro-N-acetyl-beta-muramate + ATP + H2O = N-acetyl-D-muramate 6-phosphate + ADP + H(+). It functions in the pathway amino-sugar metabolism; 1,6-anhydro-N-acetylmuramate degradation. It participates in cell wall biogenesis; peptidoglycan recycling. In terms of biological role, catalyzes the specific phosphorylation of 1,6-anhydro-N-acetylmuramic acid (anhMurNAc) with the simultaneous cleavage of the 1,6-anhydro ring, generating MurNAc-6-P. Is required for the utilization of anhMurNAc either imported from the medium or derived from its own cell wall murein, and thus plays a role in cell wall recycling. The polypeptide is Anhydro-N-acetylmuramic acid kinase (Shewanella frigidimarina (strain NCIMB 400)).